A 213-amino-acid polypeptide reads, in one-letter code: Glycerol-3-phosphate acyltransferase (213 aa).

6 helical membrane passes run Ile-2–Ile-22, Ala-52–Phe-74, Pro-81–Phe-100, Val-112–Leu-132, Val-143–Leu-163, and Ser-164–Arg-184.

This sequence belongs to the PlsY family. In terms of assembly, probably interacts with PlsX.

It localises to the cell membrane. It catalyses the reaction an acyl phosphate + sn-glycerol 3-phosphate = a 1-acyl-sn-glycero-3-phosphate + phosphate. Its pathway is lipid metabolism; phospholipid metabolism. Its function is as follows. Catalyzes the transfer of an acyl group from acyl-phosphate (acyl-PO(4)) to glycerol-3-phosphate (G3P) to form lysophosphatidic acid (LPA). This enzyme utilizes acyl-phosphate as fatty acyl donor, but not acyl-CoA or acyl-ACP. In Streptococcus pneumoniae (strain CGSP14), this protein is Glycerol-3-phosphate acyltransferase.